The sequence spans 345 residues: Dihydroorotase (345 aa).

Residues His13 and His15 each coordinate Zn(2+). Residues 15–17 and Asn41 each bind substrate; that span reads HLR. Residues Lys99, His136, and His174 each contribute to the Zn(2+) site. Position 99 is an N6-carboxylysine (Lys99). A substrate-binding site is contributed by His136. Substrate is bound at residue Leu219. A Zn(2+)-binding site is contributed by Asp247. The active site involves Asp247. Substrate contacts are provided by His251 and Ala263.

The protein belongs to the metallo-dependent hydrolases superfamily. DHOase family. Class II DHOase subfamily. As to quaternary structure, homodimer. Requires Zn(2+) as cofactor.

It catalyses the reaction (S)-dihydroorotate + H2O = N-carbamoyl-L-aspartate + H(+). It participates in pyrimidine metabolism; UMP biosynthesis via de novo pathway; (S)-dihydroorotate from bicarbonate: step 3/3. Functionally, catalyzes the reversible cyclization of carbamoyl aspartate to dihydroorotate. This chain is Dihydroorotase, found in Agrobacterium fabrum (strain C58 / ATCC 33970) (Agrobacterium tumefaciens (strain C58)).